We begin with the raw amino-acid sequence, 81 residues long: Photosystem I iron-sulfur center (81 aa).

2 consecutive 4Fe-4S ferredoxin-type domains span residues alanine 2 to tryptophan 31 and isoleucine 39 to tyrosine 68. Residues cysteine 11, cysteine 14, cysteine 17, cysteine 21, cysteine 48, cysteine 51, cysteine 54, and cysteine 58 each contribute to the [4Fe-4S] cluster site.

The eukaryotic PSI reaction center is composed of at least 11 subunits. The cofactor is [4Fe-4S] cluster.

It localises to the plastid. The protein resides in the chloroplast thylakoid membrane. The catalysed reaction is reduced [plastocyanin] + hnu + oxidized [2Fe-2S]-[ferredoxin] = oxidized [plastocyanin] + reduced [2Fe-2S]-[ferredoxin]. Its function is as follows. Apoprotein for the two 4Fe-4S centers FA and FB of photosystem I (PSI); essential for photochemical activity. FB is the terminal electron acceptor of PSI, donating electrons to ferredoxin. The C-terminus interacts with PsaA/B/D and helps assemble the protein into the PSI complex. Required for binding of PsaD and PsaE to PSI. PSI is a plastocyanin-ferredoxin oxidoreductase, converting photonic excitation into a charge separation, which transfers an electron from the donor P700 chlorophyll pair to the spectroscopically characterized acceptors A0, A1, FX, FA and FB in turn. This chain is Photosystem I iron-sulfur center, found in Physcomitrium patens (Spreading-leaved earth moss).